The primary structure comprises 348 residues: UDP-glucose 4-epimerase (348 aa).

NAD(+) contacts are provided by residues 12–14 (GYI), 33–37 (DNFHN), 66–67 (DI), Phe88, and Lys92. 132–134 (SAT) contacts substrate. Residue Tyr157 is the Proton acceptor of the active site. 2 residues coordinate NAD(+): Lys161 and Tyr185. Residues 185–187 (YFN), 206–208 (NNL), 224–226 (NVF), Arg239, and 300–303 (REGD) each bind substrate.

Belongs to the NAD(P)-dependent epimerase/dehydratase family. Homodimer. Requires NAD(+) as cofactor.

It carries out the reaction UDP-alpha-D-glucose = UDP-alpha-D-galactose. The enzyme catalyses UDP-N-acetyl-alpha-D-glucosamine = UDP-N-acetyl-alpha-D-galactosamine. It participates in carbohydrate metabolism; galactose metabolism. In terms of biological role, catalyzes two distinct but analogous reactions: the reversible epimerization of UDP-glucose to UDP-galactose and the reversible epimerization of UDP-N-acetylglucosamine to UDP-N-acetylgalactosamine. The reaction with UDP-Gal plays a critical role in the Leloir pathway of galactose catabolism in which galactose is converted to the glycolytic intermediate glucose 6-phosphate. It contributes to the catabolism of dietary galactose and enables the endogenous biosynthesis of both UDP-Gal and UDP-GalNAc when exogenous sources are limited. Both UDP-sugar interconversions are important in the synthesis of glycoproteins and glycolipids. This is UDP-glucose 4-epimerase (GALE) from Pongo abelii (Sumatran orangutan).